We begin with the raw amino-acid sequence, 269 residues long: L-cystine-binding protein TcyJ (269 aa).

A signal peptide spans 1 to 20 (MNKRKGLVLLLSVFALLGGG). Residue Cys-21 is the site of N-palmitoyl cysteine attachment. A lipid anchor (S-diacylglycerol cysteine) is attached at Cys-21.

Belongs to the bacterial solute-binding protein 3 family. The complex is composed of two ATP-binding proteins (TcyN), two transmembrane proteins (TcyL and TcyM) and two solute-binding proteins (TcyJ and TcyK).

Its subcellular location is the cell membrane. In terms of biological role, part of the ABC transporter complex TcyJKLMN involved in L-cystine import. Is also involved in cystathionine, djenkolate, and S-methylcysteine transport. The protein is L-cystine-binding protein TcyJ (tcyJ) of Bacillus subtilis (strain 168).